Reading from the N-terminus, the 450-residue chain is Phosphoglucosamine mutase (450 aa).

Ser101 acts as the Phosphoserine intermediate in catalysis. Mg(2+) is bound by residues Ser101, Asp241, Asp243, and Asp245. Ser101 is modified (phosphoserine).

This sequence belongs to the phosphohexose mutase family. Requires Mg(2+) as cofactor. In terms of processing, activated by phosphorylation.

It catalyses the reaction alpha-D-glucosamine 1-phosphate = D-glucosamine 6-phosphate. Catalyzes the conversion of glucosamine-6-phosphate to glucosamine-1-phosphate. This Listeria welshimeri serovar 6b (strain ATCC 35897 / DSM 20650 / CCUG 15529 / CIP 8149 / NCTC 11857 / SLCC 5334 / V8) protein is Phosphoglucosamine mutase.